We begin with the raw amino-acid sequence, 476 residues long: 3-isopropylmalate dehydratase large subunit (476 aa).

C353, C413, and C416 together coordinate [4Fe-4S] cluster.

This sequence belongs to the aconitase/IPM isomerase family. LeuC type 1 subfamily. As to quaternary structure, heterodimer of LeuC and LeuD. Requires [4Fe-4S] cluster as cofactor.

The enzyme catalyses (2R,3S)-3-isopropylmalate = (2S)-2-isopropylmalate. It participates in amino-acid biosynthesis; L-leucine biosynthesis; L-leucine from 3-methyl-2-oxobutanoate: step 2/4. Its function is as follows. Catalyzes the isomerization between 2-isopropylmalate and 3-isopropylmalate, via the formation of 2-isopropylmaleate. The chain is 3-isopropylmalate dehydratase large subunit from Yersinia pseudotuberculosis serotype O:1b (strain IP 31758).